The sequence spans 181 residues: MMDNRGNSSLPDKLPIFPDSARLPLTRSFYLEPMVTFHVHPEAPVSSPYSEELPRLPFPSDSLILGNYSEPCPFSFPMPYPNYRGCEYSYGPAFTRKRNERERQRVKCVNEGYAQLRHHLPEEYLEKRLSKVETLRAAIKYINYLQSLLYPDKAETKNNPGKVSSMIATTSHHADPMFRIV.

Positions Ala93–Val106 are basic motif. The region spanning Ala93–Leu145 is the bHLH domain. Positions Lys107–Leu145 are helix-loop-helix motif.

Efficient DNA binding requires dimerization with another bHLH protein. As to expression, widely expressed in fetal and adult tissues.

It is found in the nucleus. Functionally, transcriptional repressor. Inhibits myogenesis. Plays a role in progenitor cells which differentiate into ductal and acinar, but not myoepithelial, cell lineages in the salivary glands. Involved in the functions of the microvillar cells and Bowman's glands and probably, in a non-cell-autonomous manner, in the development or regeneration of a complete olfactory epithelium (OE). This chain is Achaete-scute homolog 3, found in Homo sapiens (Human).